The primary structure comprises 541 residues: MRKSSIRRRATAFGTAGALVTATLIAGAVSAPAASAAPADGHGHGHGHGRSWDREARGAAIAAARAARAGIDWEDCAADWNLPKPIQCGYVTVPMDYAKPYGKQIRLAVDRIGNTGTRSERQGALIYNPGGPGGSGLRFPARVTSKSAVWANTAKAYDFVGFDPRGVGHSAPISCVDPQEFVKAPKADPVPGSEADKRAQRKLAREYAEGCFERSGEMLPHMTTPNTARDLDVIRAALGEKKLNYLGVSYGTYLGAVYGTLFPDHVRRMVVDSVVNPSRDKIWYQANLDQDVAFEGRWKDWQDWVAANDAAYHLGDTRAEVQDQWLKLRAAAAKKPLGGVVGPAELISFFQSAPYYDSAWAPTAEIFSKYVAGDTQALVDAAAPDLSDTAGNASAENGNAVYTAVECTDAKWPANWRTWDRDNTRLHRDHPFMTWANAWMNLPCATWPVKQQTPLNVKTGKGLPPVLIVQSERDAATPYEGAVELHQRFRGSRLITERDAGSHGVTGLVNPCINDRVDTYLLTGGTDARDVTCAPHATPRP.

The first 36 residues, 1–36 (MRKSSIRRRATAFGTAGALVTATLIAGAVSAPAASA), serve as a signal peptide directing secretion. The propeptide occupies 37–39 (APA). Residues 123–501 (GALIYNPGGP…SRLITERDAG (379 aa)) enclose the AB hydrolase-1 domain. The Nucleophile role is filled by S249. D474 is a catalytic residue. Catalysis depends on H503, which acts as the Proton donor.

The protein belongs to the peptidase S33 family.

The protein resides in the secreted. Its function is as follows. Cleaves tripeptides from the N-termini of proteins. Does not cleave mono- or dipeptides, or N-terminally blocked peptides. The protein is Tripeptidyl aminopeptidase of Streptomyces coelicolor (strain ATCC BAA-471 / A3(2) / M145).